The chain runs to 294 residues: Pyrroline-5-carboxylate reductase (294 aa).

The protein belongs to the pyrroline-5-carboxylate reductase family.

It is found in the cytoplasm. The enzyme catalyses L-proline + NADP(+) = (S)-1-pyrroline-5-carboxylate + NADPH + 2 H(+). The catalysed reaction is L-proline + NAD(+) = (S)-1-pyrroline-5-carboxylate + NADH + 2 H(+). The protein operates within amino-acid biosynthesis; L-proline biosynthesis; L-proline from L-glutamate 5-semialdehyde: step 1/1. Functionally, catalyzes the reduction of 1-pyrroline-5-carboxylate (PCA) to L-proline. The chain is Pyrroline-5-carboxylate reductase from Mycobacterium leprae (strain TN).